A 1642-amino-acid chain; its full sequence is MGSKRAMDVHMFPSDLEFAVFTDQEIRKLSVVKVITGITFDALGHAIPGGLYDIRMGSYGRCMDPCGTCLKLQDCPGHMGHIELGTPVYNPFFIKFVQRLLCIFCLHCYKLQMKDHECEIIMLQLRLIDAGYIIEAQELELFKSEIVCQNTENLVAIKNGDMVHPHIAAMYKLLEKNEKNSSNSTKTSCSLRTAITHSALQRLGKKCRHCNKSMRFVRYMHRRLVFYVTLADIKERVGTGAETGGQNKVIFADECRRYLRQIYANYPELLKLLVPVLGLSNTDLTQGDRSPVDLFFMDTLPVTPPRARPLNMVGDMLKGNPQTDIYINIIENNHVLNVVLKYMKGGQEKLTEEAKAAYQTLKGETAHEKLYTAWLALQMSVDVLLDVNMSREMKSGEGLKQIIEKKSGLIRSHMMGKRVNYAARTVITPDPNINVDEIGIPDIFAKKLSYPVPVTEWNVTELRKMVMNGPDVHPGANYIQDKNGFTTYIPADNASKRESLAKLLLSNPKDGIKIVHRHVLNGDVLLLNRQPSLHKPSIMGHKARILHGEKTFRLHYSNCKAYNADFDGDEMNAHYPQSEVARAEAYNLVNVASNYLVPKDGTPLGGLIQDHVISGVKLSIRGRFFNREDYQQLVFQGLSQLKKDIKLLPPTILKPAVLWSGKQILSTIIINIIPEGYERINLDSFAKIAGKNWNVSRPRPPICGTNPEGNDLSESQVQIRNGELLVGVLDKQQYGATTYGLIHCMYELYGGDVSTLLLTAFTKVFTFFLQLEGFTLGVKDILVTDVADRKRRKIIRECRNVGNSAVAAALELEDEPPHDELVEKMEAAYVKDSKFRVLLDRKYKSLLDGYTNDINSTCLPRGLITKFPSNNLQLMVLSGAKGSMVNTMQISCLLGQIELEGKRPPLMISGKSLPSFTSFETSPKSGGFIDGRFMTGIQPQDFFFHCMAGREGLIDTAVKTSRSGYLQRCLIKHLEGLSVHYDLTVRDSDNSVVQFLYGEDGLDILKSKFFNDKFCADFLTQNATAILRPAQLQLMKDEEQLAKVQRHEKHIRSWEKKKPAKLRAAFTHFSEELREEVEVKRPNEINSKTGRRRFDEGLLKLWKKADAEDKALYRKKYARCPDPTVAVYKQDLYYGSVSERTRKLITDYAKRKPALKETIADIMRVKTIKSLAAPGEPVGLIAAQSIGEPSTQMTLNTFHFAGRGEMNVTLGIPRLREILMLASSNIKTPSMDIPIKPGQQHQAEKLRINLNSVTLANLLEYVHVSTGLTLDPERSYEYDMRFQFLPREVYKEDYGVRPKHIIKYMHQTFFKQLIRAILKVSNASRTTKIVVIDDKKDADKDDDNDLDNGDEVGRSKAKANDDDSSDDNDDDDATGVKLKQRKTDEKDYDDPDDVEELHDANDDDDEAEDEDDEEKGQDGNDNDGDDKAVERLLSNDMVKAYTYDKENHLWCQVKLNLSVRYQKPDLTSIIRELAGKSVVHQVQHIKRAIIYKGNDDDQLLKTDGINIGEMFQHNKILDLNRLYSNDIHAIARTYGIEAASQVIVKEVSNVFKVYGITVDRRHLSLIADYMTFDGTFQPLSRKGMEHSSSPLQQMSFESSLQFLKSAAGFGRADELSSPSSRLMVGLPVRNGTGAFELLTKIC.

The Zn(2+) site is built by Cys66, Cys69, Cys75, and His78. Mg(2+) is bound by residues Asp565, Asp567, and Asp569. Residues Pro939–Glu951 form a bridging helix region. A disordered region spans residues Asp1337–Ala1428. The span at Lys1340–Asp1350 shows a compositional bias: acidic residues. Residues Glu1351 to Asp1361 are compositionally biased toward basic and acidic residues. 2 stretches are compositionally biased toward acidic residues: residues Asp1362 to Ala1373 and Lys1386 to Gly1424. Ser1364 and Ser1365 each carry phosphoserine.

The protein belongs to the RNA polymerase beta' chain family. In terms of assembly, component of the RNA polymerase I (Pol I) complex consisting of at least 13 subunits. In terms of processing, phosphorylated.

The protein resides in the nucleus. It localises to the nucleolus. The enzyme catalyses RNA(n) + a ribonucleoside 5'-triphosphate = RNA(n+1) + diphosphate. Its function is as follows. DNA-dependent RNA polymerase catalyzes the transcription of DNA into RNA using the four ribonucleoside triphosphates as substrates. Largest and catalytic core component of RNA polymerase I which synthesizes ribosomal RNA precursors. Forms the polymerase active center together with the second largest subunit. A single stranded DNA template strand of the promoter is positioned within the central active site cleft of Pol I. A bridging helix emanates from RPA1 and crosses the cleft near the catalytic site and is thought to promote translocation of Pol I by acting as a ratchet that moves the RNA-DNA hybrid through the active site by switching from straight to bent conformations at each step of nucleotide addition. The sequence is that of DNA-directed RNA polymerase I subunit RPA1 (RpI1) from Drosophila melanogaster (Fruit fly).